The following is an 881-amino-acid chain: Alanine--tRNA ligase (881 aa).

A compositionally biased stretch (basic and acidic residues) spans 422–440; it reads FEDEMQKQKERARSARSTE. The disordered stretch occupies residues 422-445; sequence FEDEMQKQKERARSARSTEKSMGV. The Zn(2+) site is built by H567, H571, C669, and H673.

This sequence belongs to the class-II aminoacyl-tRNA synthetase family. Requires Zn(2+) as cofactor.

Its subcellular location is the cytoplasm. The enzyme catalyses tRNA(Ala) + L-alanine + ATP = L-alanyl-tRNA(Ala) + AMP + diphosphate. Its function is as follows. Catalyzes the attachment of alanine to tRNA(Ala) in a two-step reaction: alanine is first activated by ATP to form Ala-AMP and then transferred to the acceptor end of tRNA(Ala). Also edits incorrectly charged Ser-tRNA(Ala) and Gly-tRNA(Ala) via its editing domain. The protein is Alanine--tRNA ligase of Pediococcus pentosaceus (strain ATCC 25745 / CCUG 21536 / LMG 10740 / 183-1w).